Here is a 224-residue protein sequence, read N- to C-terminus: Putative O-methyltransferase MUL_4520 (224 aa).

Residues 1–11 (MHGTDSSSDTP) are compositionally biased toward polar residues. Positions 1-20 (MHGTDSSSDTPGQPAPSRAE) are disordered. Residues V51, E73, 75–76 (GT), S81, D99, and I100 each bind S-adenosyl-L-methionine. D147 is a substrate binding site. D149 contributes to the S-adenosyl-L-methionine binding site.

Belongs to the class I-like SAM-binding methyltransferase superfamily. Cation-dependent O-methyltransferase family.

The sequence is that of Putative O-methyltransferase MUL_4520 from Mycobacterium ulcerans (strain Agy99).